The primary structure comprises 272 residues: NH(3)-dependent NAD(+) synthetase (272 aa).

45-52 provides a ligand contact to ATP; it reads GISGGQDS. D51 contributes to the Mg(2+) binding site. R138 provides a ligand contact to deamido-NAD(+). T158 is a binding site for ATP. E163 contacts Mg(2+). Residues K171 and D178 each contribute to the deamido-NAD(+) site. ATP-binding residues include K187 and T209. 258-259 lines the deamido-NAD(+) pocket; sequence HK.

This sequence belongs to the NAD synthetase family. In terms of assembly, homodimer.

It carries out the reaction deamido-NAD(+) + NH4(+) + ATP = AMP + diphosphate + NAD(+) + H(+). The protein operates within cofactor biosynthesis; NAD(+) biosynthesis; NAD(+) from deamido-NAD(+) (ammonia route): step 1/1. Its function is as follows. Catalyzes the ATP-dependent amidation of deamido-NAD to form NAD. Uses ammonia as a nitrogen source. This is NH(3)-dependent NAD(+) synthetase from Bacillus cereus (strain Q1).